The chain runs to 547 residues: Chaperonin GroEL 3 (547 aa).

ATP contacts are provided by residues 30 to 33, K51, 87 to 91, G415, and D496; these read TLGP and DGTTT.

It belongs to the chaperonin (HSP60) family. As to quaternary structure, forms a cylinder of 14 subunits composed of two heptameric rings stacked back-to-back. Interacts with the co-chaperonin GroES.

It is found in the cytoplasm. The enzyme catalyses ATP + H2O + a folded polypeptide = ADP + phosphate + an unfolded polypeptide.. In terms of biological role, together with its co-chaperonin GroES, plays an essential role in assisting protein folding. The GroEL-GroES system forms a nano-cage that allows encapsulation of the non-native substrate proteins and provides a physical environment optimized to promote and accelerate protein folding. The polypeptide is Chaperonin GroEL 3 (Bradyrhizobium sp. (strain ORS 278)).